A 335-amino-acid chain; its full sequence is 5-dehydro-2-deoxygluconokinase (335 aa).

This sequence belongs to the carbohydrate kinase PfkB family.

It carries out the reaction 5-dehydro-2-deoxy-D-gluconate + ATP = 6-phospho-5-dehydro-2-deoxy-D-gluconate + ADP + H(+). It participates in polyol metabolism; myo-inositol degradation into acetyl-CoA; acetyl-CoA from myo-inositol: step 5/7. Its function is as follows. Catalyzes the phosphorylation of 5-dehydro-2-deoxy-D-gluconate (2-deoxy-5-keto-D-gluconate or DKG) to 6-phospho-5-dehydro-2-deoxy-D-gluconate (DKGP). The chain is 5-dehydro-2-deoxygluconokinase from Geobacillus kaustophilus (strain HTA426).